We begin with the raw amino-acid sequence, 293 residues long: Protease HtpX (293 aa).

Transmembrane regions (helical) follow at residues 4 to 24 (IALFLITNLAVMLVFGLVLSL) and 34 to 54 (GLMIMAGLFGFGGAFVSLLMS). Residue H139 participates in Zn(2+) binding. E140 is an active-site residue. Zn(2+) is bound at residue H143. The next 2 membrane-spanning stretches (helical) occupy residues 158-178 (IVNTFVIFISRLIAQVVSGFL) and 193-213 (MVYFAVATVLELVFGILASII). E222 is a binding site for Zn(2+).

This sequence belongs to the peptidase M48B family. Requires Zn(2+) as cofactor.

The protein localises to the cell inner membrane. The polypeptide is Protease HtpX (Pectobacterium atrosepticum (strain SCRI 1043 / ATCC BAA-672) (Erwinia carotovora subsp. atroseptica)).